The sequence spans 154 residues: Myoglobin (154 aa).

One can recognise a Globin domain in the interval 2–148 (GLSDGEWQLV…FRNDIAAKYK (147 aa)). Position 4 is a phosphoserine (serine 4). Residue histidine 65 coordinates nitrite. Histidine 65 serves as a coordination point for O2. Threonine 68 is modified (phosphothreonine). Residue histidine 94 coordinates heme b.

In terms of assembly, monomer.

The protein resides in the cytoplasm. It localises to the sarcoplasm. It catalyses the reaction Fe(III)-heme b-[protein] + nitric oxide + H2O = Fe(II)-heme b-[protein] + nitrite + 2 H(+). It carries out the reaction H2O2 + AH2 = A + 2 H2O. Its function is as follows. Monomeric heme protein which primary function is to store oxygen and facilitate its diffusion within muscle tissues. Reversibly binds oxygen through a pentacoordinated heme iron and enables its timely and efficient release as needed during periods of heightened demand. Depending on the oxidative conditions of tissues and cells, and in addition to its ability to bind oxygen, it also has a nitrite reductase activity whereby it regulates the production of bioactive nitric oxide. Under stress conditions, like hypoxia and anoxia, it also protects cells against reactive oxygen species thanks to its pseudoperoxidase activity. In Hystrix cristata (North African crested porcupine), this protein is Myoglobin.